The sequence spans 223 residues: GTP cyclohydrolase 1 (223 aa).

Positions 114, 117, and 185 each coordinate Zn(2+).

This sequence belongs to the GTP cyclohydrolase I family. As to quaternary structure, homomer.

The enzyme catalyses GTP + H2O = 7,8-dihydroneopterin 3'-triphosphate + formate + H(+). It functions in the pathway cofactor biosynthesis; 7,8-dihydroneopterin triphosphate biosynthesis; 7,8-dihydroneopterin triphosphate from GTP: step 1/1. The chain is GTP cyclohydrolase 1 from Chlorobium chlorochromatii (strain CaD3).